Reading from the N-terminus, the 512-residue chain is UDP-N-acetylmuramoyl-L-alanyl-D-glutamate--2,6-diaminopimelate ligase (512 aa).

UDP-N-acetyl-alpha-D-muramoyl-L-alanyl-D-glutamate is bound at residue S32. 114 to 120 (GTNGKTT) contacts ATP. Residues 156–157 (TT), S183, and R191 contribute to the UDP-N-acetyl-alpha-D-muramoyl-L-alanyl-D-glutamate site. K223 is modified (N6-carboxylysine). Meso-2,6-diaminopimelate-binding positions include R395, 419-422 (DNPR), G469, and E473. Residues 419-422 (DNPR) carry the Meso-diaminopimelate recognition motif motif.

The protein belongs to the MurCDEF family. MurE subfamily. Requires Mg(2+) as cofactor. Post-translationally, carboxylation is probably crucial for Mg(2+) binding and, consequently, for the gamma-phosphate positioning of ATP.

The protein localises to the cytoplasm. It catalyses the reaction UDP-N-acetyl-alpha-D-muramoyl-L-alanyl-D-glutamate + meso-2,6-diaminopimelate + ATP = UDP-N-acetyl-alpha-D-muramoyl-L-alanyl-gamma-D-glutamyl-meso-2,6-diaminopimelate + ADP + phosphate + H(+). It functions in the pathway cell wall biogenesis; peptidoglycan biosynthesis. Its function is as follows. Catalyzes the addition of meso-diaminopimelic acid to the nucleotide precursor UDP-N-acetylmuramoyl-L-alanyl-D-glutamate (UMAG) in the biosynthesis of bacterial cell-wall peptidoglycan. The polypeptide is UDP-N-acetylmuramoyl-L-alanyl-D-glutamate--2,6-diaminopimelate ligase (Chlorobium phaeobacteroides (strain DSM 266 / SMG 266 / 2430)).